A 247-amino-acid chain; its full sequence is V-type proton ATPase subunit D (247 aa).

This sequence belongs to the V-ATPase D subunit family. In terms of assembly, V-ATPase is a heteromultimeric enzyme made up of two complexes: the ATP-hydrolytic V1 complex and the proton translocation V0 complex. The V1 complex consists of three catalytic AB heterodimers that form a heterohexamer, three peripheral stalks each consisting of EG heterodimers, one central rotor including subunits D and F, and the regulatory subunits C and H. The proton translocation complex V0 consists of the proton transport subunit a, a ring of proteolipid subunits c9c'', rotary subunit d, subunits e and f, and the accessory subunits ATP6AP1/Ac45 and ATP6AP2/PRR. Interacts with SNX10.

It is found in the membrane. It localises to the cytoplasmic vesicle. The protein localises to the clathrin-coated vesicle membrane. Its subcellular location is the cytoplasm. The protein resides in the cytoskeleton. It is found in the microtubule organizing center. It localises to the centrosome. The protein localises to the cell projection. Its subcellular location is the cilium. Functionally, subunit of the V1 complex of vacuolar(H+)-ATPase (V-ATPase), a multisubunit enzyme composed of a peripheral complex (V1) that hydrolyzes ATP and a membrane integral complex (V0) that translocates protons. V-ATPase is responsible for acidifying and maintaining the pH of intracellular compartments and in some cell types, is targeted to the plasma membrane, where it is responsible for acidifying the extracellular environment. May play a role in cilium biogenesis through regulation of the transport and the localization of proteins to the cilium. In Mus musculus (Mouse), this protein is V-type proton ATPase subunit D (Atp6v1d).